A 231-amino-acid chain; its full sequence is 2-C-methyl-D-erythritol 4-phosphate cytidylyltransferase (231 aa).

It belongs to the IspD/TarI cytidylyltransferase family. IspD subfamily. In terms of assembly, homodimer.

It carries out the reaction 2-C-methyl-D-erythritol 4-phosphate + CTP + H(+) = 4-CDP-2-C-methyl-D-erythritol + diphosphate. It participates in isoprenoid biosynthesis; isopentenyl diphosphate biosynthesis via DXP pathway; isopentenyl diphosphate from 1-deoxy-D-xylulose 5-phosphate: step 2/6. In terms of biological role, catalyzes the formation of 4-diphosphocytidyl-2-C-methyl-D-erythritol from CTP and 2-C-methyl-D-erythritol 4-phosphate (MEP). The protein is 2-C-methyl-D-erythritol 4-phosphate cytidylyltransferase of Citrobacter koseri (strain ATCC BAA-895 / CDC 4225-83 / SGSC4696).